A 158-amino-acid polypeptide reads, in one-letter code: 3-dehydroquinate dehydratase (158 aa).

The active-site Proton acceptor is the Tyr-24. Substrate-binding residues include Asn-75, His-81, and Asp-88. His-101 functions as the Proton donor in the catalytic mechanism. Substrate-binding positions include Leu-102–Ser-103 and Arg-112.

It belongs to the type-II 3-dehydroquinase family. In terms of assembly, homododecamer.

The catalysed reaction is 3-dehydroquinate = 3-dehydroshikimate + H2O. It participates in metabolic intermediate biosynthesis; chorismate biosynthesis; chorismate from D-erythrose 4-phosphate and phosphoenolpyruvate: step 3/7. In terms of biological role, catalyzes a trans-dehydration via an enolate intermediate. The polypeptide is 3-dehydroquinate dehydratase (Bartonella bacilliformis (strain ATCC 35685 / KC583 / Herrer 020/F12,63)).